The chain runs to 308 residues: Porphobilinogen deaminase (308 aa).

Cys-241 is modified (S-(dipyrrolylmethanemethyl)cysteine).

The protein belongs to the HMBS family. In terms of assembly, monomer. Dipyrromethane is required as a cofactor.

The enzyme catalyses 4 porphobilinogen + H2O = hydroxymethylbilane + 4 NH4(+). It participates in porphyrin-containing compound metabolism; protoporphyrin-IX biosynthesis; coproporphyrinogen-III from 5-aminolevulinate: step 2/4. In terms of biological role, tetrapolymerization of the monopyrrole PBG into the hydroxymethylbilane pre-uroporphyrinogen in several discrete steps. In Staphylococcus carnosus (strain TM300), this protein is Porphobilinogen deaminase.